A 320-amino-acid chain; its full sequence is Glutathione synthetase (320 aa).

The region spanning 130 to 315 (KIFTSWFPDL…ITGMLLDYIE (186 aa)) is the ATP-grasp domain. 156–212 (WEKYQDIIIKPLDAMGGANIFRIKKNDPNFSVIVENMTNYERKYCMVQNYLPEIKLG) is an ATP binding site. 2 residues coordinate Mg(2+): Glu-286 and Asn-288.

Belongs to the prokaryotic GSH synthase family. The cofactor is Mg(2+). Requires Mn(2+) as cofactor.

It catalyses the reaction gamma-L-glutamyl-L-cysteine + glycine + ATP = glutathione + ADP + phosphate + H(+). The protein operates within sulfur metabolism; glutathione biosynthesis; glutathione from L-cysteine and L-glutamate: step 2/2. This chain is Glutathione synthetase, found in Buchnera aphidicola subsp. Acyrthosiphon pisum (strain APS) (Acyrthosiphon pisum symbiotic bacterium).